We begin with the raw amino-acid sequence, 297 residues long: HTH-type transcriptional regulator ArgP (297 aa).

Residues 4-60 (PDYRTLQALDAVIRERGFERAAQKLCITQSAVSQRIKQLENMFGQPLLVRTVPPRPT) enclose the HTH lysR-type domain. A DNA-binding region (H-T-H motif) is located at residues 21–40 (FERAAQKLCITQSAVSQRIK).

It belongs to the LysR transcriptional regulatory family. Homodimer.

Controls the transcription of genes involved in arginine and lysine metabolism. This is HTH-type transcriptional regulator ArgP from Salmonella dublin (strain CT_02021853).